Here is a 145-residue protein sequence, read N- to C-terminus: Small ribosomal subunit protein uS12 (145 aa).

This sequence belongs to the universal ribosomal protein uS12 family. In terms of assembly, component of the small ribosomal subunit. Mature ribosomes consist of a small (40S) and a large (60S) subunit. The 40S subunit contains about 32 different proteins and 1 molecule of RNA (18S). The 60S subunit contains 45 different proteins and 3 molecules of RNA (25S, 5.8S and 5S).

It localises to the cytoplasm. Functionally, component of the ribosome, a large ribonucleoprotein complex responsible for the synthesis of proteins in the cell. The small ribosomal subunit (SSU) binds messenger RNAs (mRNAs) and translates the encoded message by selecting cognate aminoacyl-transfer RNA (tRNA) molecules. The large subunit (LSU) contains the ribosomal catalytic site termed the peptidyl transferase center (PTC), which catalyzes the formation of peptide bonds, thereby polymerizing the amino acids delivered by tRNAs into a polypeptide chain. The nascent polypeptides leave the ribosome through a tunnel in the LSU and interact with protein factors that function in enzymatic processing, targeting, and the membrane insertion of nascent chains at the exit of the ribosomal tunnel. This is Small ribosomal subunit protein uS12 (RPS23A) from Candida albicans (strain SC5314 / ATCC MYA-2876) (Yeast).